The chain runs to 126 residues: Large ribosomal subunit protein bL17 (126 aa).

Belongs to the bacterial ribosomal protein bL17 family. As to quaternary structure, part of the 50S ribosomal subunit. Contacts protein L32.

In Limosilactobacillus fermentum (strain NBRC 3956 / LMG 18251) (Lactobacillus fermentum), this protein is Large ribosomal subunit protein bL17.